Reading from the N-terminus, the 320-residue chain is Beta-ketoacyl-[acyl-carrier-protein] synthase III (320 aa).

Active-site residues include Cys112 and His245. The interval 246–250 (QANIR) is ACP-binding. The active site involves Asn275.

This sequence belongs to the thiolase-like superfamily. FabH family. In terms of assembly, homodimer.

The protein resides in the cytoplasm. It catalyses the reaction malonyl-[ACP] + acetyl-CoA + H(+) = 3-oxobutanoyl-[ACP] + CO2 + CoA. The protein operates within lipid metabolism; fatty acid biosynthesis. Its function is as follows. Catalyzes the condensation reaction of fatty acid synthesis by the addition to an acyl acceptor of two carbons from malonyl-ACP. Catalyzes the first condensation reaction which initiates fatty acid synthesis and may therefore play a role in governing the total rate of fatty acid production. Possesses both acetoacetyl-ACP synthase and acetyl transacylase activities. Its substrate specificity determines the biosynthesis of branched-chain and/or straight-chain of fatty acids. This Streptococcus thermophilus (strain CNRZ 1066) protein is Beta-ketoacyl-[acyl-carrier-protein] synthase III.